The primary structure comprises 204 residues: uncharacterized protein (204 aa).

An N-terminal signal peptide occupies residues 1 to 17 (MKRLVTGLLALSLFLAA). Residues 17-100 (ACGQDSDQQK…NNNQANNNQK (84 aa)) form a disordered region. A lipid anchor (N-palmitoyl cysteine) is attached at C18. A lipid anchor (S-diacylglycerol cysteine) is attached at C18. Residues 23 to 70 (DQQKDGNKEKDDKAKTEQQDKKTNDSSKDKKDNKDDSKDVNKDNKDNS) are compositionally biased toward basic and acidic residues. Low complexity predominate over residues 71 to 100 (ANDNQQQSNSNATNNDQNQTNNNQANNNQK).

The protein resides in the cell membrane. This is an uncharacterized protein from Staphylococcus aureus (strain MSSA476).